The following is a 534-amino-acid chain: Lysophosphatidylcholine acyltransferase 1 (534 aa).

The interval 1–25 is disordered; it reads MRLRGRGPRAAPSSSSGAGDARRLA. Topologically, residues 1-57 are cytoplasmic; it reads MRLRGRGPRAAPSSSSGAGDARRLAPPGRNPFVHELRLSALQKAQVAFMTLTLFPIR. Positions 8–19 are enriched in low complexity; that stretch reads PRAAPSSSSGAG. The chain crosses the membrane as a helical; Signal-anchor for type II membrane protein span at residues 58 to 78; the sequence is LLFAAFMMLLAWPFALVASLG. Over 79–534 the chain is Lumenal; the sequence is PPDKEPEQPL…GRKNSCKKVD (456 aa). Residues 135 to 140 carry the HXXXXD motif motif; sequence HSSYFD. EF-hand domains lie at 379 to 414 and 451 to 486; these read PVSD…VCRP and ISEL…YPDF. 4 residues coordinate Ca(2+): D392, S394, E398, and E403. The Di-lysine motif signature appears at 531 to 534; it reads KKVD.

It belongs to the 1-acyl-sn-glycerol-3-phosphate acyltransferase family. In terms of tissue distribution, enriched in alveolar type II cells of lung. Also highly expressed in stomach.

It localises to the endoplasmic reticulum membrane. The protein resides in the golgi apparatus membrane. Its subcellular location is the cell membrane. The protein localises to the lipid droplet. It carries out the reaction a 1-acyl-sn-glycero-3-phosphocholine + an acyl-CoA = a 1,2-diacyl-sn-glycero-3-phosphocholine + CoA. The catalysed reaction is a 1-O-alkyl-sn-glycero-3-phosphocholine + acetyl-CoA = a 1-O-alkyl-2-acetyl-sn-glycero-3-phosphocholine + CoA. It catalyses the reaction a 1-acyl-sn-glycero-3-phosphate + an acyl-CoA = a 1,2-diacyl-sn-glycero-3-phosphate + CoA. The enzyme catalyses a 1-O-(1Z-alkenyl)-sn-glycero-3-phosphocholine + an acyl-CoA = a 1-O-(1Z-alkenyl)-2-acyl-sn-glycero-3-phosphocholine + CoA. It carries out the reaction 1-acyl-sn-glycero-3-phospho-(1'-sn-glycerol) + an acyl-CoA = a 1,2-diacyl-sn-glycero-3-phospho-(1'-sn-glycerol) + CoA. The catalysed reaction is a 1-acyl-sn-glycero-3-phosphocholine + hexadecanoyl-CoA = 1-acyl-2-hexadecanoyl-sn-glycero-3-phosphocholine + CoA. It catalyses the reaction a 1-acyl-sn-glycero-3-phosphate + hexadecanoyl-CoA = 1-acyl-2-hexadecanoyl-sn-glycero-3-phosphate + CoA. The enzyme catalyses 1-acyl-sn-glycero-3-phospho-(1'-sn-glycerol) + hexadecanoyl-CoA = 1-acyl-2-hexadecanoyl-sn-glycero-3-phospho-(1'-sn-glycerol) + CoA. It carries out the reaction 1-hexadecanoyl-sn-glycero-3-phosphocholine + hexadecanoyl-CoA = 1,2-dihexadecanoyl-sn-glycero-3-phosphocholine + CoA. The catalysed reaction is 1-O-hexadecyl-sn-glycero-3-phosphocholine + hexadecanoyl-CoA = 1-O-hexadecyl-2-hexadecanoyl-sn-glycero-3-phosphocholine + CoA. It catalyses the reaction a 1-O-(1Z-alkenyl)-sn-glycero-3-phosphocholine + hexadecanoyl-CoA = 1-O-(1Z)-alkenyl-2-hexadecanoyl-sn-glycero-3-phosphocholine + CoA. The enzyme catalyses 1-hexadecanoyl-sn-glycero-3-phospho-(1'-sn-glycerol) + hexadecanoyl-CoA = 1,2-dihexadecanoyl-sn-glycero-3-phospho-(1'-sn-glycerol) + CoA. It carries out the reaction 1-dodecanoyl-sn-glycero-3-phosphocholine + hexadecanoyl-CoA = 1-dodecanoyl-2-hexadecanoyl-sn-glycero-3-phosphocholine + CoA. The catalysed reaction is 1-tetradecanoyl-sn-glycero-3-phosphocholine + hexadecanoyl-CoA = 1-tetradecanoyl-2-hexadecanoyl-sn-glycero-3-phosphocholine + CoA. It catalyses the reaction 1-O-octadecyl-sn-glycero-3-phosphocholine + hexadecanoyl-CoA = 1-O-octadecyl-2-hexadecanoyl-sn-glycero-3-phosphocholine + CoA. The enzyme catalyses 1-octadecanoyl-sn-glycero-3-phosphocholine + hexadecanoyl-CoA = 1-octadecanoyl-2-hexadecanoyl-sn-glycero-3-phosphocholine + CoA. It carries out the reaction 1-(9Z-octadecenoyl)-sn-glycero-3-phosphocholine + hexadecanoyl-CoA = 1-(9Z-octadecenoyl)-2-hexadecanoyl-sn-glycero-3-phosphocholine + CoA. The catalysed reaction is 1-eicosanoyl-sn-glycero-3-phosphocholine + hexadecanoyl-CoA = 1-eicosanoyl-2-hexadecanoyl-sn-glycero-3-phosphocholine + CoA. It catalyses the reaction hexanoyl-CoA + 1-hexadecanoyl-sn-glycero-3-phosphocholine = 1-hexadecanoyl-2-hexanoyl-sn-glycero-3-phosphocholine + CoA. The enzyme catalyses octanoyl-CoA + 1-hexadecanoyl-sn-glycero-3-phosphocholine = 1-hexadecanoyl-2-octanoyl-sn-glycero-3-phosphocholine + CoA. It carries out the reaction decanoyl-CoA + 1-hexadecanoyl-sn-glycero-3-phosphocholine = 1-hexadecanoyl-2-decanoyl-sn-glycero-3-phosphocholine + CoA. The catalysed reaction is dodecanoyl-CoA + 1-hexadecanoyl-sn-glycero-3-phosphocholine = 1-hexadecanoyl-2-dodecanoyl-sn-glycero-3-phosphocholine + CoA. It catalyses the reaction tetradecanoyl-CoA + 1-hexadecanoyl-sn-glycero-3-phosphocholine = 1-hexadecanoyl-2-tetradecanoyl-sn-glycero-3-phosphocholine + CoA. The enzyme catalyses 1-hexadecanoyl-sn-glycero-3-phosphocholine + (9Z)-octadecenoyl-CoA = 1-hexadecanoyl-2-(9Z-octadecenoyl)-sn-glycero-3-phosphocholine + CoA. It carries out the reaction (9Z,12Z)-octadecadienoyl-CoA + 1-hexadecanoyl-sn-glycero-3-phosphocholine = 1-hexadecanoyl-2-(9Z,12Z-octadecadienoyl)-sn-glycero-3-phosphocholine + CoA. The catalysed reaction is (4Z,7Z,10Z,13Z,16Z,19Z)-docosahexaenoyl-CoA + 1-hexadecanoyl-sn-glycero-3-phosphocholine = 1-hexadecanoyl-2-(4Z,7Z,10Z,13Z,16Z,19Z-docosahexaenoyl)-sn-glycero-3-phosphocholine + CoA. It catalyses the reaction 1-hexadecanoyl-sn-glycero-3-phosphocholine + acetyl-CoA = 1-hexadecanoyl-2-acetyl-sn-glycero-3-phosphocholine + CoA. The enzyme catalyses eicosanoyl-CoA + 1-hexadecanoyl-sn-glycero-3-phosphocholine = 1-hexadecanoyl-2-eicosanoyl-sn-glycero-3-phosphocholine + CoA. It carries out the reaction 1-O-hexadecyl-sn-glycero-3-phosphocholine + acetyl-CoA = 1-O-hexadecyl-2-acetyl-sn-glycero-3-phosphocholine + CoA. It functions in the pathway lipid metabolism; phospholipid metabolism. Activity is stimulated by Mg(2+) or Mn(2+). In terms of biological role, exhibits acyltransferase activity. Exhibits acetyltransferase activity. Activity is calcium-independent. Catalyzes the conversion of lysophosphatidylcholine (1-acyl-sn-glycero-3-phosphocholine or LPC) into phosphatidylcholine (1,2-diacyl-sn-glycero-3-phosphocholine or PC). Catalyzes the conversion 1-acyl-sn-glycerol-3-phosphate (lysophosphatidic acid or LPA) into 1,2-diacyl-sn-glycerol-3-phosphate (phosphatidic acid or PA) by incorporating an acyl moiety at the sn-2 position of the glycerol backbone. Displays a clear preference for saturated fatty acyl-CoAs, and 1-myristoyl or 1-palmitoyl LPC as acyl donors and acceptors, respectively. Involved in platelet-activating factor (PAF) biosynthesis by catalyzing the conversion of the PAF precursor, 1-O-alkyl-sn-glycero-3-phosphocholine (lyso-PAF) into 1-O-alkyl-2-acetyl-sn-glycero-3-phosphocholine (PAF). May synthesize phosphatidylcholine in pulmonary surfactant, thereby playing a pivotal role in respiratory physiology. Involved in the regulation of lipid droplet number and size. The protein is Lysophosphatidylcholine acyltransferase 1 (Lpcat1) of Rattus norvegicus (Rat).